Consider the following 616-residue polypeptide: Chaperone protein HscA (616 aa).

It belongs to the heat shock protein 70 family.

Functionally, chaperone involved in the maturation of iron-sulfur cluster-containing proteins. Has a low intrinsic ATPase activity which is markedly stimulated by HscB. Involved in the maturation of IscU. This Pectobacterium atrosepticum (strain SCRI 1043 / ATCC BAA-672) (Erwinia carotovora subsp. atroseptica) protein is Chaperone protein HscA.